The sequence spans 78 residues: Translational regulator CsrA (78 aa).

It belongs to the CsrA/RsmA family. Homodimer; the beta-strands of each monomer intercalate to form a hydrophobic core, while the alpha-helices form wings that extend away from the core.

The protein resides in the cytoplasm. A translational regulator that binds mRNA to regulate translation initiation and/or mRNA stability. Usually binds in the 5'-UTR at or near the Shine-Dalgarno sequence preventing ribosome-binding, thus repressing translation. Its main target seems to be the major flagellin gene, while its function is anatagonized by FliW. The protein is Translational regulator CsrA of Oleidesulfovibrio alaskensis (strain ATCC BAA-1058 / DSM 17464 / G20) (Desulfovibrio alaskensis).